Here is a 183-residue protein sequence, read N- to C-terminus: Phosphopantetheine adenylyltransferase (183 aa).

Ser8 lines the substrate pocket. ATP contacts are provided by residues 8–9 (SF) and His16. The substrate site is built by Lys40, Thr72, and Arg86. ATP-binding positions include 87-89 (GLR), Glu97, and 122-128 (YSFLSSS).

This sequence belongs to the bacterial CoaD family. In terms of assembly, homohexamer. The cofactor is Mg(2+).

It localises to the cytoplasm. The catalysed reaction is (R)-4'-phosphopantetheine + ATP + H(+) = 3'-dephospho-CoA + diphosphate. It functions in the pathway cofactor biosynthesis; coenzyme A biosynthesis; CoA from (R)-pantothenate: step 4/5. Its function is as follows. Reversibly transfers an adenylyl group from ATP to 4'-phosphopantetheine, yielding dephospho-CoA (dPCoA) and pyrophosphate. In Nostoc punctiforme (strain ATCC 29133 / PCC 73102), this protein is Phosphopantetheine adenylyltransferase.